A 959-amino-acid chain; its full sequence is Mitogen-activated protein kinase kinase kinase 13 (959 aa).

A disordered region spans residues 1–47 (MANPQEHLSCSSLPHLPLTENKTSGGRNELAAMGNHPSPKLPEDPQE). A compositionally biased stretch (low complexity) spans 7–18 (HLSCSSLPHLPL). In terms of domain architecture, Protein kinase spans 167–408 (ISELQWLGSG…FRQTLMHLDI (242 aa)). Residues 173–181 (LGSGAQGAV) and Lys-194 each bind ATP. The active-site Proton acceptor is the Asp-278. Leucine-zipper stretches follow at residues 432–453 (VKKH…DEEL) and 485–506 (LSAI…EQAV). 4 disordered regions span residues 533–599 (KRKG…GSHS), 739–828 (GSLD…RQRP), 842–902 (SSEN…LSDK), and 927–959 (NPVQ…SATW). A compositionally biased stretch (polar residues) spans 566-577 (SPLSGSPKMSTA). Residues 581–593 (SRYRSKPRHRRGN) are compositionally biased toward basic residues. 2 stretches are compositionally biased toward polar residues: residues 754–774 (DLSS…SERT) and 780–790 (SGCQSGISHQF). A compositionally biased stretch (acidic residues) spans 808–820 (DSSEEEGEVDSEV). Positions 866-876 (SANRRQDRLAE) are enriched in basic and acidic residues. Residues 934 to 943 (SDCDSSEGEC) show a composition bias toward acidic residues. A compositionally biased stretch (polar residues) spans 947 to 959 (TVRTSKNYSSATW).

Belongs to the protein kinase superfamily. STE Ser/Thr protein kinase family. MAP kinase kinase kinase subfamily. Homodimer; forms dimers through the leucine-zipper motif. Interacts with the C-terminus of MAPK8IP1 through the kinase catalytic domain. Binds PRDX3. Associates with the IKK complex through the kinase domain. Mg(2+) is required as a cofactor. Autophosphorylated on serine and threonine residues.

The protein resides in the cytoplasm. It localises to the membrane. It catalyses the reaction L-seryl-[protein] + ATP = O-phospho-L-seryl-[protein] + ADP + H(+). The catalysed reaction is L-threonyl-[protein] + ATP = O-phospho-L-threonyl-[protein] + ADP + H(+). With respect to regulation, activated by autophosphorylation and homodimerization. Activates the JUN N-terminal pathway through activation of the MAP kinase kinase MAP2K7. Acts synergistically with PRDX3 to regulate the activation of NF-kappa-B in the cytosol. This activation is kinase-dependent and involves activating the IKK complex, the IKBKB-containing complex that phosphorylates inhibitors of NF-kappa-B. In Mus musculus (Mouse), this protein is Mitogen-activated protein kinase kinase kinase 13 (Map3k13).